The chain runs to 205 residues: Holliday junction branch migration complex subunit RuvA (205 aa).

The segment at Met1–Ile64 is domain I. The interval Thr65–Glu143 is domain II. The segment at Arg144–Pro156 is flexible linker. The interval Val157–Leu205 is domain III.

It belongs to the RuvA family. As to quaternary structure, homotetramer. Forms an RuvA(8)-RuvB(12)-Holliday junction (HJ) complex. HJ DNA is sandwiched between 2 RuvA tetramers; dsDNA enters through RuvA and exits via RuvB. An RuvB hexamer assembles on each DNA strand where it exits the tetramer. Each RuvB hexamer is contacted by two RuvA subunits (via domain III) on 2 adjacent RuvB subunits; this complex drives branch migration. In the full resolvosome a probable DNA-RuvA(4)-RuvB(12)-RuvC(2) complex forms which resolves the HJ.

It localises to the cytoplasm. Functionally, the RuvA-RuvB-RuvC complex processes Holliday junction (HJ) DNA during genetic recombination and DNA repair, while the RuvA-RuvB complex plays an important role in the rescue of blocked DNA replication forks via replication fork reversal (RFR). RuvA specifically binds to HJ cruciform DNA, conferring on it an open structure. The RuvB hexamer acts as an ATP-dependent pump, pulling dsDNA into and through the RuvAB complex. HJ branch migration allows RuvC to scan DNA until it finds its consensus sequence, where it cleaves and resolves the cruciform DNA. The protein is Holliday junction branch migration complex subunit RuvA of Shewanella sediminis (strain HAW-EB3).